The chain runs to 355 residues: Peptide chain release factor 1 (355 aa).

N5-methylglutamine is present on Q233.

It belongs to the prokaryotic/mitochondrial release factor family. Post-translationally, methylated by PrmC. Methylation increases the termination efficiency of RF1.

It localises to the cytoplasm. Functionally, peptide chain release factor 1 directs the termination of translation in response to the peptide chain termination codons UAG and UAA. This is Peptide chain release factor 1 from Clostridium tetani (strain Massachusetts / E88).